The sequence spans 170 residues: MAQIRIHEENTRIENEVEVSNFLQGEDVLYEKWNISKLPTHLKENYSLTDENKAEILTLFSKEIADVSERRGYKAYDVVSLSNSTPNLDELLINFQKEHHHTDDEVRFIVSGHGIFAIEGKDGRFFDVELEPGDLISVPENARHYFTLQDDRQVVAIRIFVTTEGWVPIY.

The Fe(2+) site is built by histidine 99, histidine 101, glutamate 105, and histidine 144. Ni(2+)-binding residues include histidine 99, histidine 101, glutamate 105, and histidine 144.

Belongs to the acireductone dioxygenase (ARD) family. As to quaternary structure, monomer. The cofactor is Fe(2+). Ni(2+) is required as a cofactor.

It catalyses the reaction 1,2-dihydroxy-5-(methylsulfanyl)pent-1-en-3-one + O2 = 3-(methylsulfanyl)propanoate + CO + formate + 2 H(+). It carries out the reaction 1,2-dihydroxy-5-(methylsulfanyl)pent-1-en-3-one + O2 = 4-methylsulfanyl-2-oxobutanoate + formate + 2 H(+). It participates in amino-acid biosynthesis; L-methionine biosynthesis via salvage pathway; L-methionine from S-methyl-5-thio-alpha-D-ribose 1-phosphate: step 5/6. In terms of biological role, catalyzes 2 different reactions between oxygen and the acireductone 1,2-dihydroxy-3-keto-5-methylthiopentene (DHK-MTPene) depending upon the metal bound in the active site. Fe-containing acireductone dioxygenase (Fe-ARD) produces formate and 2-keto-4-methylthiobutyrate (KMTB), the alpha-ketoacid precursor of methionine in the methionine recycle pathway. Ni-containing acireductone dioxygenase (Ni-ARD) produces methylthiopropionate, carbon monoxide and formate, and does not lie on the methionine recycle pathway. The polypeptide is Acireductone dioxygenase (Bacillus mycoides (strain KBAB4) (Bacillus weihenstephanensis)).